A 349-amino-acid chain; its full sequence is MEAVKAEAWEGAAVAQDLLALGYGGVPGAASRGASCPDFRGLCVRLAAELATLGALEQQREAGAEVLSAGDGPGAEEDFLRQLGSLLRELHCPDRALCGGDGAAALREPGAGLRLLRFLCSELQATRLLCLRSLLDPSPRPPLGEGVVEGAGMVQELDLTLQALGLPRPAPGTPASQLLQELHAKISELQPSLPPGSLQPLLSCSLDAPRWEALESLSQSLRDQYRCRRCLLLKRLDLTTSAFHWSDRAEAQGEAMRAVLIPIREVLTPESDISIAHVLAARADLSCLVPATSVAVRRGTCCAINKVLMGNVPDRGGRPNELEPPMPTWRSRREDGGPQCWGRKKKKKK.

Residues 313–349 are disordered; sequence PDRGGRPNELEPPMPTWRSRREDGGPQCWGRKKKKKK.

It belongs to the FAM98 family.

The sequence is that of Protein FAM98C (FAM98C) from Homo sapiens (Human).